Reading from the N-terminus, the 152-residue chain is Ubiquitin-conjugating enzyme E2 N (152 aa).

The UBC core domain occupies 3–149; it reads GLPRRIIKET…ARAWTRLYAM (147 aa). K82 is subject to N6-acetyllysine. The Glycyl thioester intermediate role is filled by C87. K92 participates in a covalent cross-link: Glycyl lysine isopeptide (Lys-Gly) (interchain with G-Cter in ISG15). S131 carries the phosphoserine modification.

Belongs to the ubiquitin-conjugating enzyme family. In terms of assembly, heterodimer with UBE2V2. Interacts (UBE2V2-UBE2N heterodimer) with the E3 ligase STUB1 (via the U-box domain); the complex has a specific 'Lys-63'-linked polyubiquitination activity. Interacts with RNF8 and RNF168. Interacts with RNF11. Interacts with the E3 ligases, HLTF and SHPRH; the interactions promote the 'Lys-63'-linked polyubiquitination of PCNA upon genotoxic stress and lead to DNA repair. Interacts with ARIH2 (via RING-type 2). Interacts with OTUB1; leading to inhibit E2-conjugating activity. Interacts with GPS2; leading to inhibit E2-conjugating activity. Interacts with RIGI and RNF135; involved in RIGI ubiquitination and activation. Post-translationally, conjugation to ISG15 impairs formation of the thioester bond with ubiquitin but not interaction with UBE2V2.

It carries out the reaction S-ubiquitinyl-[E1 ubiquitin-activating enzyme]-L-cysteine + [E2 ubiquitin-conjugating enzyme]-L-cysteine = [E1 ubiquitin-activating enzyme]-L-cysteine + S-ubiquitinyl-[E2 ubiquitin-conjugating enzyme]-L-cysteine.. The protein operates within protein modification; protein ubiquitination. Activity is inhibited by binding to OTUB1, which prevents 'Lys-63'-linked polyubiquitination. Activity is inhibited by GPS2, leading to prevent 'Lys-63'-linked polyubiquitination. Its function is as follows. The UBE2V1-UBE2N and UBE2V2-UBE2N heterodimers catalyze the synthesis of non-canonical 'Lys-63'-linked polyubiquitin chains. This type of polyubiquitination does not lead to protein degradation by the proteasome. Mediates transcriptional activation of target genes. Plays a role in the control of progress through the cell cycle and differentiation. Plays a role in the error-free DNA repair pathway and contributes to the survival of cells after DNA damage. Acts together with the E3 ligases, HLTF and SHPRH, in the 'Lys-63'-linked poly-ubiquitination of PCNA upon genotoxic stress, which is required for DNA repair. Appears to act together with E3 ligase RNF5 in the 'Lys-63'-linked polyubiquitination of JKAMP thereby regulating JKAMP function by decreasing its association with components of the proteasome and ERAD. Promotes TRIM5 capsid-specific restriction activity and the UBE2V1-UBE2N heterodimer acts in concert with TRIM5 to generate 'Lys-63'-linked polyubiquitin chains which activate the MAP3K7/TAK1 complex which in turn results in the induction and expression of NF-kappa-B and MAPK-responsive inflammatory genes. Together with RNF135 and UB2V1, catalyzes the viral RNA-dependent 'Lys-63'-linked polyubiquitination of RIGI to activate the downstream signaling pathway that leads to interferon beta production. UBE2V1-UBE2N together with TRAF3IP2 E3 ubiquitin ligase mediate 'Lys-63'-linked polyubiquitination of TRAF6, a component of IL17A-mediated signaling pathway. This Rattus norvegicus (Rat) protein is Ubiquitin-conjugating enzyme E2 N (Ube2n).